The primary structure comprises 71 residues: Beta-defensin 25 (71 aa).

An N-terminal signal peptide occupies residues 1–22; sequence MAKWILLIVALLVLSHVPPGST. Disulfide bonds link Cys-27–Cys-54, Cys-34–Cys-48, and Cys-38–Cys-55.

It belongs to the beta-defensin family.

Its subcellular location is the secreted. Has antibacterial activity. This Mus musculus (Mouse) protein is Beta-defensin 25 (Defb25).